The chain runs to 89 residues: Small ribosomal subunit protein uS14 (89 aa).

Belongs to the universal ribosomal protein uS14 family. In terms of assembly, part of the 30S ribosomal subunit. Contacts proteins S3 and S10.

Functionally, binds 16S rRNA, required for the assembly of 30S particles and may also be responsible for determining the conformation of the 16S rRNA at the A site. In Chlorobium luteolum (strain DSM 273 / BCRC 81028 / 2530) (Pelodictyon luteolum), this protein is Small ribosomal subunit protein uS14.